A 364-amino-acid polypeptide reads, in one-letter code: Phosphoserine aminotransferase (364 aa).

Arginine 40 is a binding site for L-glutamate. Pyridoxal 5'-phosphate is bound by residues 74-75 (GT), tryptophan 100, threonine 149, aspartate 170, and glutamine 193. N6-(pyridoxal phosphate)lysine is present on lysine 194. 235-236 (NT) lines the pyridoxal 5'-phosphate pocket.

This sequence belongs to the class-V pyridoxal-phosphate-dependent aminotransferase family. SerC subfamily. In terms of assembly, homodimer. Pyridoxal 5'-phosphate serves as cofactor. Expressed in ovary and head.

The catalysed reaction is O-phospho-L-serine + 2-oxoglutarate = 3-phosphooxypyruvate + L-glutamate. The enzyme catalyses 4-(phosphooxy)-L-threonine + 2-oxoglutarate = (R)-3-hydroxy-2-oxo-4-phosphooxybutanoate + L-glutamate. The protein operates within amino-acid biosynthesis; L-serine biosynthesis; L-serine from 3-phospho-D-glycerate: step 2/3. It functions in the pathway cofactor biosynthesis; pyridoxine 5'-phosphate biosynthesis; pyridoxine 5'-phosphate from D-erythrose 4-phosphate: step 3/5. In terms of biological role, catalyzes the reversible conversion of 3-phosphohydroxypyruvate to phosphoserine and of 3-hydroxy-2-oxo-4-phosphonooxybutanoate to phosphohydroxythreonine. The sequence is that of Phosphoserine aminotransferase from Drosophila melanogaster (Fruit fly).